Reading from the N-terminus, the 332-residue chain is Putative potassium channel regulatory protein sup-10 (332 aa).

An N-terminal signal peptide occupies residues 1–18; the sequence is MRYAVFIFLIVLIDLIYC. The Extracellular segment spans residues 19 to 301; it reads WNSKRSFFIP…EISERNKRPA (283 aa). 3 N-linked (GlcNAc...) asparagine glycosylation sites follow: Asn-61, Asn-107, and Asn-166. Residues 302–322 form a helical membrane-spanning segment; sequence FVLVGLTGGIAVIILAFSIFW. Residues 323–332 lie on the Cytoplasmic side of the membrane; sequence GLNGSGFNKD.

As to quaternary structure, may form a complex with sup-9 and unc-93 where sup-10 and unc-93 act as regulatory subunits of the two pore potassium channel sup-9. Sup-10 may regulate sup-9 via sup-18. In terms of tissue distribution, low levels in body-wall muscles, eight vulval muscles, intestinal muscles and anal depressor muscle.

It localises to the membrane. May contribute to coordination of muscle contraction as regulatory subunit of a nonessential potassium channel complex. This chain is Putative potassium channel regulatory protein sup-10, found in Caenorhabditis elegans.